Consider the following 561-residue polypeptide: SUN domain-containing protein 5 (561 aa).

A helical transmembrane segment spans residues 36-56 (GSFFERSISLVLLLWCFLFLV). The region spanning 158–318 (NGSSQLVNNG…SVVEVFGIDA (161 aa)) is the SUN domain. Residues 345–367 (ADEKQDGEIKSNRTDQIGKETEA) form a disordered region. A coiled-coil region spans residues 454–499 (MEKELRDLELWKTLVASRVESLARGNSALRLDVEKIVKEQANLESK). Transmembrane regions (helical) follow at residues 501–521 (LGVLLISLFFVVLATIRLVST) and 540–560 (PDSGWVMILLSSSIMIFIHLL).

Forms homomers. Interacts with SUN3 and TIK.

The protein resides in the membrane. Encodes a member of the mid-SUN subfamily of SUN-domain proteins. It is involved in early seed development and nuclear morphology. [TAIR]. This Arabidopsis thaliana (Mouse-ear cress) protein is SUN domain-containing protein 5.